Here is a 29-residue protein sequence, read N- to C-terminus: Alpha-amylase inhibitor 2 (29 aa).

Belongs to the protease inhibitor I6 (cereal trypsin/alpha-amylase inhibitor) family.

Its subcellular location is the secreted. Functionally, alpha-amylase inhibitor. In Saussurea costus (Costus), this protein is Alpha-amylase inhibitor 2.